We begin with the raw amino-acid sequence, 379 residues long: Bifunctional enzyme IspD/IspF (379 aa).

The interval 1–223 is 2-C-methyl-D-erythritol 4-phosphate cytidylyltransferase; sequence MTVAVIIVAA…RERKGLTMDV (223 aa). Positions 224-379 are 2-C-methyl-D-erythritol 2,4-cyclodiphosphate synthase; that stretch reads RLGNGYDVHA…SIATVTLIGA (156 aa). Residues D230 and H232 each coordinate a divalent metal cation. 4-CDP-2-C-methyl-D-erythritol 2-phosphate contacts are provided by residues 230 to 232 and 256 to 257; these read DVH and HS. H264 is an a divalent metal cation binding site. 4-CDP-2-C-methyl-D-erythritol 2-phosphate-binding positions include 278–280, 354–357, F361, and R364; these read DIG and TTSE.

It in the N-terminal section; belongs to the IspD/TarI cytidylyltransferase family. IspD subfamily. This sequence in the C-terminal section; belongs to the IspF family. Requires a divalent metal cation as cofactor.

The enzyme catalyses 2-C-methyl-D-erythritol 4-phosphate + CTP + H(+) = 4-CDP-2-C-methyl-D-erythritol + diphosphate. The catalysed reaction is 4-CDP-2-C-methyl-D-erythritol 2-phosphate = 2-C-methyl-D-erythritol 2,4-cyclic diphosphate + CMP. It functions in the pathway isoprenoid biosynthesis; isopentenyl diphosphate biosynthesis via DXP pathway; isopentenyl diphosphate from 1-deoxy-D-xylulose 5-phosphate: step 2/6. It participates in isoprenoid biosynthesis; isopentenyl diphosphate biosynthesis via DXP pathway; isopentenyl diphosphate from 1-deoxy-D-xylulose 5-phosphate: step 4/6. In terms of biological role, bifunctional enzyme that catalyzes the formation of 4-diphosphocytidyl-2-C-methyl-D-erythritol from CTP and 2-C-methyl-D-erythritol 4-phosphate (MEP) (IspD), and catalyzes the conversion of 4-diphosphocytidyl-2-C-methyl-D-erythritol 2-phosphate (CDP-ME2P) to 2-C-methyl-D-erythritol 2,4-cyclodiphosphate (ME-CPP) with a corresponding release of cytidine 5-monophosphate (CMP) (IspF). The protein is Bifunctional enzyme IspD/IspF of Rhodobacter capsulatus (strain ATCC BAA-309 / NBRC 16581 / SB1003).